The chain runs to 416 residues: MAAPGENRRVNADRLWDSLMEMAKIGPGVAGGNNRQTLTDADGEGRRLFQSWCEEAGLSMGVDKMGTMFLTRPGTDPDALPVHIGSHLDTQPTGGKFDGVLGVLSGLEAVRTMNDLGIKTKHPIVVTNWTNEEGARFAPAMLASGVFAGVHTLEYAYARKDPEGKSFGDELKRIGWLGDEEVGARKMHAYFEYHIEQGPILEAENKQIGVVTHCQGLWWLEFTLTGREAHTGSTPMDMRVNAGLAMARILEMVQTVAMENQPGAVGGVGQMFFSPNSRNVLPGKVVFTVDIRSPDQAKLDGMRARIEAEAPKICERLGVGCSIEAVGHFDPVTFDPKLVETVRGAAEKLGYSHMNLVSGAGHDACWAAKVAPTTMIMCPCVGGLSHNEAEDISREWAAAGADVLFHAVLETAEIVE.

4 residues coordinate a divalent metal cation: H87, D98, E133, and H194. An N-carbamoyl-L-alpha-amino acid is bound by residues Q197, H230, N279, R292, and G361. The segment at 213–331 (HCQGLWWLEF…SIEAVGHFDP (119 aa)) is involved in dimerization. H386 serves as a coordination point for a divalent metal cation.

This sequence belongs to the peptidase M20 family. In terms of assembly, homodimer. The cofactor is Mn(2+). It depends on Ni(2+) as a cofactor. Co(2+) serves as cofactor. Fe(2+) is required as a cofactor.

The catalysed reaction is an N-carbamoyl-L-alpha-amino acid + H2O + 2 H(+) = an L-alpha-amino acid + NH4(+) + CO2. The enzyme catalyses N-carbamoyl-L-methionine + H2O + 2 H(+) = L-methionine + NH4(+) + CO2. It carries out the reaction N-acetyl-L-methionine + H2O = L-methionine + acetate. It catalyses the reaction N(alpha)-formyl-L-methionine + H2O = formate + L-methionine. The catalysed reaction is N-carbamoyl-L-alanine + H2O + 2 H(+) = L-alanine + NH4(+) + CO2. The enzyme catalyses N-carbamoyl-L-cysteine + H2O + 2 H(+) = L-cysteine + NH4(+) + CO2. It carries out the reaction N-carbamoyl-L-tryptophan + H2O + 2 H(+) = L-tryptophan + NH4(+) + CO2. It catalyses the reaction N-carbamoyl-L-valine + H2O + 2 H(+) = L-valine + NH4(+) + CO2. The catalysed reaction is N-carbamoyl-L-phenylalanine + H2O + 2 H(+) = L-phenylalanine + NH4(+) + CO2. Its activity is regulated as follows. Strongly inhibited by Hg(2+), Cu(2+), Zn(2+), Pb(2+) and Fe(3+) ions, and slightly inhibited by Na(+) and K(+) ions. Beta-mercaptoethanol and 5,5'-dithiobis-(2-nitrobenzoic acid)(DTNB) cause 34% and 42% inhibition, respectively. Catalyzes the hydrolysis of both aliphatic and aromatic N-carbamoyl-L-alpha-amino acids to free L-alpha-amino acids. Is strictly L-specific since it is inactive toward N-carbamoyl-D-alpha-amino acids. Is also able to hydrolyze N-formyl-L-methionine and N-acetyl-L-methionine, but not ureidosuccinate or 3-ureidopropanoate. The polypeptide is N-carbamoyl-L-amino-acid amidohydrolase (Rhizobium meliloti (Ensifer meliloti)).